Consider the following 79-residue polypeptide: Calcium/calmodulin-dependent protein kinase II inhibitor 2 (79 aa).

The interval 43-69 (KRPPKLGQIGRAKRVVIEDDRIDEVLK) is inhibitory domain.

It belongs to the CAMK2N family.

It localises to the nucleus. The protein localises to the cytoplasm. Its subcellular location is the cytosol. Its function is as follows. Potent and specific cellular inhibitor of CaM-kinase II (CAMK2). Traps Ca(2+)/calmodulin on CAMK2. This Xenopus laevis (African clawed frog) protein is Calcium/calmodulin-dependent protein kinase II inhibitor 2 (camk2n2).